We begin with the raw amino-acid sequence, 268 residues long: MIKTVLFGACGKMGKVIGKALIDATDIELVGAIDPYFKGEKYEKIIGIDKISLEVVESIDELQEDFDVAIDFTNAEAAYQNIKKVLQKGKRMVVGTTGLTQEMMEEFKDLAVKNKTAILIAPNFALGAVLMIQLAKQVVKYFPDVEIIELHHNEKADAPSGTAILTAEVLREEMKKYNLTHKDATKIEKLPGARGGKLDSINIHSVRLPGLVAHQEVIFGGLGQTLSIRHDALSRECYIPGVLMAVREIVKREGFFYGLESFLNREEA.

NAD(+) contacts are provided by residues 8 to 13 (GACGKM), Asp-34, 95 to 97 (GTT), and 121 to 124 (APNF). Residue His-151 is the Proton donor/acceptor of the active site. (S)-2,3,4,5-tetrahydrodipicolinate is bound at residue His-152. The active-site Proton donor is the Lys-155. Residue 161-162 (GT) participates in (S)-2,3,4,5-tetrahydrodipicolinate binding.

The protein belongs to the DapB family.

Its subcellular location is the cytoplasm. The catalysed reaction is (S)-2,3,4,5-tetrahydrodipicolinate + NAD(+) + H2O = (2S,4S)-4-hydroxy-2,3,4,5-tetrahydrodipicolinate + NADH + H(+). It catalyses the reaction (S)-2,3,4,5-tetrahydrodipicolinate + NADP(+) + H2O = (2S,4S)-4-hydroxy-2,3,4,5-tetrahydrodipicolinate + NADPH + H(+). Its pathway is amino-acid biosynthesis; L-lysine biosynthesis via DAP pathway; (S)-tetrahydrodipicolinate from L-aspartate: step 4/4. Functionally, catalyzes the conversion of 4-hydroxy-tetrahydrodipicolinate (HTPA) to tetrahydrodipicolinate. The protein is 4-hydroxy-tetrahydrodipicolinate reductase of Dictyoglomus turgidum (strain DSM 6724 / Z-1310).